Here is a 342-residue protein sequence, read N- to C-terminus: GTPase Obg (342 aa).

The region spanning 1–159 is the Obg domain; that stretch reads MKFIDEAKIY…RWIRLELKLL (159 aa). Residues 160–332 enclose the OBG-type G domain; that stretch reads ADVGIIGLPN…LLYKIGEALK (173 aa). GTP contacts are provided by residues 166-173, 191-195, 214-217, 284-287, and 313-315; these read GLPNVGKS, FTTLT, DIPG, NKTD, and SAA. The Mg(2+) site is built by S173 and T193.

It belongs to the TRAFAC class OBG-HflX-like GTPase superfamily. OBG GTPase family. As to quaternary structure, monomer. Requires Mg(2+) as cofactor.

The protein resides in the cytoplasm. Functionally, an essential GTPase which binds GTP, GDP and possibly (p)ppGpp with moderate affinity, with high nucleotide exchange rates and a fairly low GTP hydrolysis rate. Plays a role in control of the cell cycle, stress response, ribosome biogenesis and in those bacteria that undergo differentiation, in morphogenesis control. The chain is GTPase Obg from Syntrophus aciditrophicus (strain SB).